Reading from the N-terminus, the 321-residue chain is Probable pectate lyase A (321 aa).

An N-terminal signal peptide occupies residues 1 to 18 (MKFVATLIACGLSGLALA). Asparagine 93 carries N-linked (GlcNAc...) asparagine glycosylation. Residues aspartate 134, aspartate 163, and aspartate 167 each coordinate Ca(2+). Residue arginine 220 is part of the active site. N-linked (GlcNAc...) asparagine glycosylation is present at asparagine 238.

The protein belongs to the polysaccharide lyase 1 family. Ca(2+) is required as a cofactor.

Its subcellular location is the secreted. The catalysed reaction is Eliminative cleavage of (1-&gt;4)-alpha-D-galacturonan to give oligosaccharides with 4-deoxy-alpha-D-galact-4-enuronosyl groups at their non-reducing ends.. Functionally, pectinolytic enzyme consist of four classes of enzymes: pectin lyase, polygalacturonase, pectin methylesterase and rhamnogalacturonase. Among pectinolytic enzymes, pectin lyase is the most important in depolymerization of pectin, since it cleaves internal glycosidic bonds of highly methylated pectins. Favors pectate, the anion, over pectin, the methyl ester. This Aspergillus fumigatus (strain CBS 144.89 / FGSC A1163 / CEA10) (Neosartorya fumigata) protein is Probable pectate lyase A (plyA).